Here is an 876-residue protein sequence, read N- to C-terminus: Valine--tRNA ligase (876 aa).

The short motif at 44–54 (PNVTGKLHLGH) is the 'HIGH' region element. The short motif at 520 to 524 (KMSKS) is the 'KMSKS' region element. K523 serves as a coordination point for ATP. The stretch at 805 to 876 (LEGLIDMDKE…VKARIEQLKA (72 aa)) forms a coiled coil.

Belongs to the class-I aminoacyl-tRNA synthetase family. ValS type 1 subfamily. As to quaternary structure, monomer.

The protein localises to the cytoplasm. The enzyme catalyses tRNA(Val) + L-valine + ATP = L-valyl-tRNA(Val) + AMP + diphosphate. Its function is as follows. Catalyzes the attachment of valine to tRNA(Val). As ValRS can inadvertently accommodate and process structurally similar amino acids such as threonine, to avoid such errors, it has a 'posttransfer' editing activity that hydrolyzes mischarged Thr-tRNA(Val) in a tRNA-dependent manner. This is Valine--tRNA ligase from Staphylococcus aureus (strain Mu3 / ATCC 700698).